The sequence spans 403 residues: Tyrosine--tRNA ligase (403 aa).

Residues Pro42 to His51 carry the 'HIGH' region motif. A 'KMSKS' region motif is present at residues Lys226 to Ser230. Lys229 serves as a coordination point for ATP. One can recognise an S4 RNA-binding domain in the interval Leu339–Leu400.

The protein belongs to the class-I aminoacyl-tRNA synthetase family. TyrS type 2 subfamily. In terms of assembly, homodimer.

The protein resides in the cytoplasm. The catalysed reaction is tRNA(Tyr) + L-tyrosine + ATP = L-tyrosyl-tRNA(Tyr) + AMP + diphosphate + H(+). Functionally, catalyzes the attachment of tyrosine to tRNA(Tyr) in a two-step reaction: tyrosine is first activated by ATP to form Tyr-AMP and then transferred to the acceptor end of tRNA(Tyr). The protein is Tyrosine--tRNA ligase of Xanthomonas axonopodis pv. citri (strain 306).